The following is a 152-amino-acid chain: Succinate dehydrogenase [ubiquinone] cytochrome b small subunit B, mitochondrial (152 aa).

The transit peptide at 1 to 21 directs the protein to the mitochondrion; that stretch reads MATLLRVSSLCRANRASAFKS. Over 22-56 the chain is Mitochondrial matrix; it reads LLIRPLPCLSQDLHMVQTSQIHTSPNHHAGSKAAS. A helical membrane pass occupies residues 57-78; that stretch reads MHWTGERALSVALLGLLPAAYL. The Mitochondrial intermembrane portion of the chain corresponds to 79 to 83; that stretch reads YPGAA. The chain crosses the membrane as a helical span at residues 84–104; sequence MDYSLAAALTLHGHWGLGQVV. Position 95 (His-95) interacts with heme b. Topologically, residues 105-113 are mitochondrial matrix; that stretch reads TDYVHGETK. Position 107 (Tyr-107) interacts with a ubiquinone. A helical membrane pass occupies residues 114–135; that stretch reads IKMANTSLFALSALTFAGLCYF. At 136–152 the chain is on the mitochondrial intermembrane side; the sequence is NYHDVGICKAVAMLWSL.

Belongs to the CybS family. As to quaternary structure, component of complex II composed of four subunits: the flavoprotein (FP) SDHA, iron-sulfur protein (IP) SDHB, and a cytochrome b560 composed of SDHC and SDHD.

The protein resides in the mitochondrion inner membrane. Its pathway is carbohydrate metabolism; tricarboxylic acid cycle. In terms of biological role, membrane-anchoring subunit of succinate dehydrogenase (SDH) that is involved in complex II of the mitochondrial electron transport chain and is responsible for transferring electrons from succinate to ubiquinone (coenzyme Q). SDH also oxidizes malate to the non-canonical enol form of oxaloacetate, enol-oxaloacetate. Enol-oxaloacetate, which is a potent inhibitor of the succinate dehydrogenase activity, is further isomerized into keto-oxaloacetate. This chain is Succinate dehydrogenase [ubiquinone] cytochrome b small subunit B, mitochondrial (sdhd-b), found in Xenopus laevis (African clawed frog).